Here is a 199-residue protein sequence, read N- to C-terminus: N-(5'-phosphoribosyl)anthranilate isomerase (199 aa).

It belongs to the TrpF family.

The catalysed reaction is N-(5-phospho-beta-D-ribosyl)anthranilate = 1-(2-carboxyphenylamino)-1-deoxy-D-ribulose 5-phosphate. The protein operates within amino-acid biosynthesis; L-tryptophan biosynthesis; L-tryptophan from chorismate: step 3/5. The protein is N-(5'-phosphoribosyl)anthranilate isomerase of Streptococcus pneumoniae (strain Hungary19A-6).